Reading from the N-terminus, the 1078-residue chain is MPRRKQQAPRRSAAYVPEEELKAADIEEDNLEDDGLSLDVQDSEYLYNDEHEIKETPSYQNSPISSATNQDAGYGSPFSETSDHLADFKSTSSKEGQDKEDGQNTENVSYPTDSLAQIKAVYTNLLSECCWSNLALDLKKSNENSSPTTNTNKSSMSEATGSTSDPDTPTTIPSSSCTNTSTSISVTTSNSTNSNSASGYDWHQAALAKTLQQTSYGLLPEPSLFSTVQLYRQSNKIYGSVFTGASRFKCKDCSAAYDTLVELTVHMNETGHYRDDNKDRDAERTKRWSKPRKRSLMEMEGKEDAQKVLKCMYCGHSFESLQDLSVHMIKTKHYQKVPLKEPVPAITKLIPSTKKRALQDIALPDSPEQAGISPGASVSESAKDPKAANPYVTPNNRYGYQNGASYTWQFEARKAQILKCMECGSSHDSLQQLTAHMMVTGHFLKVTNSASKKGKQLVMDAVIEEKIQSIPLPPTTHARLPGSYIKKQPDSPTGSTHSEEKKDPEKEKVNNCEVEKRIKEENEDPEKIEPATLYQYLREEDLDTSPKGGLDILKSLENTVSSAISKAQNGAPSWGGYPSIHAAYQLPGTVKALQPSVQSVQIQPSYAISVKTMTPDHNSLIHSPGSLTPPTHRSNVSAMEELVEKVTGKINIKKEEKVLEKEMVIPAKPPSPVAKENKEILKAEEANGKVLKKSNEADIQKPKKETPIEPHALNGTEPLKAKVTNGCSSLGIITDHSPEPSFINPLSALQSIMNTHLGKVSKPVSPSLDPLAMLYKISNSMLDKPIYPTTPVKQVESIERYYYEDSDQPIDLTKSKNKPFVTSITDHVSSPLRESALMDISDMVKNLTGRLTPKSSTPSTVSEKSDADGSSFEEAMDELSPVHKRKGRQSNWNPQHLLILQAQFASSLRETAEGKYIMSDLGPQERVNISKFTGLSMTTISHWLANVKYQLRRTGGTKFLKNLDTGHPVFFCNDCASQFRTASTYIGHLETHLGFSLKDLSKHSLNRIQEQQNVTKVITNKALSSVGGLIEEDSSSTFQCKLCNRTFASKHAVKLHLSKTHGKSPEDHVIYVTELRKQ.

Disordered regions lie at residues 1 to 110 (MPRR…NVSY), 140 to 197 (KSNE…SNSA), and 271 to 300 (GHYR…MEME). Acidic residues predominate over residues 26 to 36 (IEEDNLEDDGL). The segment covering 57 to 71 (PSYQNSPISSATNQD) has biased composition (polar residues). The span at 143-197 (ENSSPTTNTNKSSMSEATGSTSDPDTPTTIPSSSCTNTSTSISVTTSNSTNSNSA) shows a compositional bias: low complexity. C2H2-type zinc fingers lie at residues 248-272 (FKCK…ETGH) and 309-333 (LKCM…KTKH). Positions 271–286 (GHYRDDNKDRDAERTK) are enriched in basic and acidic residues. The disordered stretch occupies residues 365-394 (DSPEQAGISPGASVSESAKDPKAANPYVTP). The C2H2-type 3 zinc finger occupies 418–442 (LKCMECGSSHDSLQQLTAHMMVTGH). Disordered regions lie at residues 472–524 (LPPT…ENED) and 850–877 (RLTP…EAMD). The span at 497–524 (HSEEKKDPEKEKVNNCEVEKRIKEENED) shows a compositional bias: basic and acidic residues. The span at 853–862 (PKSSTPSTVS) shows a compositional bias: polar residues. The segment at residues 885-955 (RKGRQSNWNP…NVKYQLRRTG (71 aa)) is a DNA-binding region (homeobox). 2 C2H2-type zinc fingers span residues 970–992 (FFCN…LETH) and 1038–1061 (FQCK…SKTH).

It belongs to the teashirt C2H2-type zinc-finger protein family.

The protein localises to the nucleus. Functionally, probable transcriptional regulator involved in developmental processes. May act as a transcriptional repressor (Potential). Involved in two major neuronal regionalization processes: primary anteroposterior (AP) axis patterning of the CNS and segmentation of the cranial neuronal crest (CNS) development. The polypeptide is Teashirt homolog 1-A (tshz1-a) (Xenopus laevis (African clawed frog)).